A 252-amino-acid chain; its full sequence is 2-succinyl-6-hydroxy-2,4-cyclohexadiene-1-carboxylate synthase (252 aa).

Belongs to the AB hydrolase superfamily. MenH family. Monomer.

It catalyses the reaction 5-enolpyruvoyl-6-hydroxy-2-succinyl-cyclohex-3-ene-1-carboxylate = (1R,6R)-6-hydroxy-2-succinyl-cyclohexa-2,4-diene-1-carboxylate + pyruvate. Its pathway is quinol/quinone metabolism; 1,4-dihydroxy-2-naphthoate biosynthesis; 1,4-dihydroxy-2-naphthoate from chorismate: step 3/7. It functions in the pathway quinol/quinone metabolism; menaquinone biosynthesis. Functionally, catalyzes a proton abstraction reaction that results in 2,5-elimination of pyruvate from 2-succinyl-5-enolpyruvyl-6-hydroxy-3-cyclohexene-1-carboxylate (SEPHCHC) and the formation of 2-succinyl-6-hydroxy-2,4-cyclohexadiene-1-carboxylate (SHCHC). This Salmonella agona (strain SL483) protein is 2-succinyl-6-hydroxy-2,4-cyclohexadiene-1-carboxylate synthase.